Consider the following 662-residue polypeptide: Tubulin--tyrosine ligase-like protein 12 (662 aa).

The TTL domain occupies 324–660 (LKKRKIKVYA…LDEIDPTKVT (337 aa)). ATP is bound by residues 472-475 (CEYI), lysine 491, and aspartate 493.

The protein belongs to the tubulin--tyrosine ligase family.

In terms of biological role, regulates microtubule dynamics in uterine muscle cells. In Caenorhabditis elegans, this protein is Tubulin--tyrosine ligase-like protein 12.